The following is a 314-amino-acid chain: Homoserine kinase (314 aa).

95 to 105 (PHSRGLGSSAA) is a binding site for ATP.

This sequence belongs to the GHMP kinase family. Homoserine kinase subfamily.

It localises to the cytoplasm. The enzyme catalyses L-homoserine + ATP = O-phospho-L-homoserine + ADP + H(+). The protein operates within amino-acid biosynthesis; L-threonine biosynthesis; L-threonine from L-aspartate: step 4/5. Its function is as follows. Catalyzes the ATP-dependent phosphorylation of L-homoserine to L-homoserine phosphate. This is Homoserine kinase from Mycobacterium sp. (strain KMS).